A 255-amino-acid chain; its full sequence is uncharacterized protein (255 aa).

It belongs to the methyltransferase superfamily.

This is an uncharacterized protein from Mycolicibacterium vanbaalenii (strain DSM 7251 / JCM 13017 / BCRC 16820 / KCTC 9966 / NRRL B-24157 / PYR-1) (Mycobacterium vanbaalenii).